A 95-amino-acid polypeptide reads, in one-letter code: Large ribosomal subunit protein bL27 (95 aa).

Positions 1–9 (MLNMNLQFF) are excised as a propeptide.

It belongs to the bacterial ribosomal protein bL27 family. In terms of processing, the N-terminus is cleaved by ribosomal processing cysteine protease Prp.

The chain is Large ribosomal subunit protein bL27 from Agathobacter rectalis (strain ATCC 33656 / DSM 3377 / JCM 17463 / KCTC 5835 / VPI 0990) (Eubacterium rectale).